Reading from the N-terminus, the 817-residue chain is Tax1-binding protein 1 homolog (817 aa).

Residues Ser-124 and Ser-138 each carry the phosphoserine modification. Positions 144-628 (TTKAGLLELK…ENQAERKLEG (485 aa)) form a coiled coil. The segment at 320 to 420 (EEISRLQFSL…ELKLSAVNKD (101 aa)) is oligomerization. Basic and acidic residues predominate over residues 609–627 (SREKEHKRSVENQAERKLE). The segment at 609 to 685 (SREKEHKRSV…ADGAFYPDEI (77 aa)) is disordered. Ser-617 carries the phosphoserine; by IKKA modification. The segment covering 628–643 (GQNSQSPHQISQCLKT) has biased composition (polar residues). Ser-633 bears the Phosphoserine mark. Ser-694 is modified (phosphoserine; by IKKA). The interval 704 to 742 (SQPARNLSRPDGLEDPEDSKEDEKVPTAPDPPSQHLRGH) is disordered. 2 UBZ1-type zinc fingers span residues 755-781 (QKKCPLCELMFPPNYDQSKFEEHVESH) and 782-808 (WKVCPMCSEQFPPDYDQQVFERHVQTH). Zn(2+)-binding residues include Cys-758, Cys-761, His-777, His-781, Cys-785, Cys-788, His-804, and His-808.

Homooligomer. Interacts with TNFAIP3. Interacts with STARD13. Interacts with MYO6. Interacts with TOM1; the interaction is indirect and is mediated by MYO6, which acts as a bridge between TOM1 and TAX1BP1. Interacts with MAVS; this interaction induces MAVS polyubiquitination. Interacts with TNIP1. Interacts with TRAF6; this interaction mediates deubiquitination of TRAF6 and inhibition of NF-kappa-B activation. Interacts with RIPK1; this interaction negatively regulates RIPK1 ubiquitination. Interacts with NBR1. Interacts with TBK1. Interacts with RB1CC1. Interacts with SQSTM1. Interacts with AZI2. In terms of processing, phosphorylated in the C-terminal region by CHUK/IKKA leading to NF-kappa-B signaling down-regulation.

The protein resides in the cytoplasm. It is found in the mitochondrion. Its subcellular location is the preautophagosomal structure. It localises to the cytoplasmic vesicle. The protein localises to the autophagosome. In terms of biological role, ubiquitin-binding adapter that participates in inflammatory, antiviral and innate immune processes as well as selective autophagy regulation. Plays a key role in the negative regulation of NF-kappa-B and IRF3 signalings by acting as an adapter for the ubiquitin-editing enzyme A20/TNFAIP3 to bind and inactivate its substrates. Disrupts the interactions between the E3 ubiquitin ligase TRAF3 and TBK1/IKBKE to attenuate 'Lys63'-linked polyubiquitination of TBK1 and thereby IFN-beta production. Also recruits A20/TNFAIP3 to ubiquitinated signaling proteins TRAF6 and RIPK1, leading to their deubiquitination and disruption of IL-1 and TNF-induced NF-kappa-B signaling pathways. Inhibits virus-induced apoptosis by inducing the 'Lys-48'-linked polyubiquitination and degradation of MAVS via recruitment of the E3 ligase ITCH, thereby attenuating MAVS-mediated apoptosis signaling. As a macroautophagy/autophagy receptor, facilitates the xenophagic clearance of pathogenic bacteria such as Salmonella typhimurium and Mycobacterium tuberculosis. Upon NBR1 recruitment to the SQSTM1-ubiquitin condensates, acts as the major recruiter of RB1CC1 to these ubiquitin condensates to promote their autophagic degradation. The polypeptide is Tax1-binding protein 1 homolog (TAX1BP1) (Bos taurus (Bovine)).